Here is a 200-residue protein sequence, read N- to C-terminus: Large ribosomal subunit protein bL25 (200 aa).

It belongs to the bacterial ribosomal protein bL25 family. CTC subfamily. In terms of assembly, part of the 50S ribosomal subunit; part of the 5S rRNA/L5/L18/L25 subcomplex. Contacts the 5S rRNA. Binds to the 5S rRNA independently of L5 and L18.

Functionally, this is one of the proteins that binds to the 5S RNA in the ribosome where it forms part of the central protuberance. This chain is Large ribosomal subunit protein bL25, found in Pseudomonas fluorescens (strain Pf0-1).